The chain runs to 345 residues: KH domain-containing, RNA-binding, signal transduction-associated protein 2 (345 aa).

Positions 65–131 (LIPVKQYPKF…AKHAHLSDEL (67 aa)) constitute a KH domain. 2 disordered regions span residues 178-224 (LNGS…TRGA) and 321-345 (SRSTLKAPLQRPARAGYREHPYGRY). A compositionally biased stretch (basic and acidic residues) spans 336–345 (GYREHPYGRY).

Belongs to the KHDRBS family.

It is found in the nucleus. Functionally, RNA-binding protein that plays a role in the regulation of alternative splicing. The protein is KH domain-containing, RNA-binding, signal transduction-associated protein 2 (khdrbs2) of Xenopus tropicalis (Western clawed frog).